We begin with the raw amino-acid sequence, 24 residues long: Calreticulin (24 aa).

It belongs to the calreticulin family. In terms of assembly, monomer. Component of an EIF2 complex at least composed of CELF1/CUGBP1, CALR, CALR3, EIF2S1, EIF2S2, HSP90B1 and HSPA5. Interacts with PDIA3/ERp57 and SPACA9. Interacts with TRIM21. Interacts with NR3C1. Interacts with PPIB. Interacts (via P-domain) with PDIA5. Interacts with CLCC1. Pancreas.

It localises to the endoplasmic reticulum lumen. The protein resides in the cytoplasm. Its subcellular location is the cytosol. It is found in the cytolytic granule. The protein localises to the secreted. It localises to the extracellular space. The protein resides in the extracellular matrix. Its subcellular location is the cell surface. It is found in the sarcoplasmic reticulum lumen. The protein localises to the cytoplasmic vesicle. It localises to the secretory vesicle. The protein resides in the cortical granule. Its function is as follows. Calcium-binding chaperone that promotes folding, oligomeric assembly and quality control in the endoplasmic reticulum (ER) via the calreticulin/calnexin cycle. This lectin interacts transiently with almost all of the monoglucosylated glycoproteins that are synthesized in the ER. Interacts with the DNA-binding domain of NR3C1 and mediates its nuclear export. Involved in maternal gene expression regulation. May participate in oocyte maturation via the regulation of calcium homeostasis. Present in the cortical granules of non-activated oocytes, is exocytosed during the cortical reaction in response to oocyte activation and might participate in the block to polyspermy. The polypeptide is Calreticulin (CALR) (Canis lupus familiaris (Dog)).